The following is a 96-amino-acid chain: Acylphosphatase (96 aa).

The Acylphosphatase-like domain maps to 11–96 (ARRWYVRGRV…ITSYDSFRIR (86 aa)). Catalysis depends on residues R26 and N44.

This sequence belongs to the acylphosphatase family.

The enzyme catalyses an acyl phosphate + H2O = a carboxylate + phosphate + H(+). This chain is Acylphosphatase (acyP), found in Solibacter usitatus (strain Ellin6076).